The chain runs to 432 residues: MSYLVISFSHKNTDIKLREKLAFNSDEDKDRFLKLILENDITKEAILLSTCNRVEIITRSLNIKQSSKDIIEKLATYSKVDFDVLYDRADIYDADGAVHHLFSVASALDSLVIGETQIVGQLKDAFRFSQAKGYCSLNITRVMHYAFKCAAQVRTATSLGTGSVSVASTAVSKAKDIIGNTKDVKALVVGAGEMSELTVKHLIASGFDVTIISRDTKKAQNLASTFEVHVNVEPYDKLTQLLITTPIMITATSAPYPIITKENAPSSNINRYWFDIAVPRDIDENISMSNLEIFSVDDLQDIVNENMSLRAEQAKTAYGIVSRMSLEFFEWLKSLEIEPIVKNLYLKGNEIIDKKVKNAIKKGFIDSKDEENIRKLCLTVITEYLHNPAKQLKDISKNMECDLVVGTVQNMFSLNENSTSKNRYKCDHLSKN.

Residues 50 to 53 (TCNR), Ser110, 115 to 117 (ETQ), and Gln121 each bind substrate. Cys51 functions as the Nucleophile in the catalytic mechanism. Residue 190–195 (GAGEMS) coordinates NADP(+).

The protein belongs to the glutamyl-tRNA reductase family. In terms of assembly, homodimer.

The catalysed reaction is (S)-4-amino-5-oxopentanoate + tRNA(Glu) + NADP(+) = L-glutamyl-tRNA(Glu) + NADPH + H(+). It functions in the pathway porphyrin-containing compound metabolism; protoporphyrin-IX biosynthesis; 5-aminolevulinate from L-glutamyl-tRNA(Glu): step 1/2. Functionally, catalyzes the NADPH-dependent reduction of glutamyl-tRNA(Glu) to glutamate 1-semialdehyde (GSA). The protein is Glutamyl-tRNA reductase of Aliarcobacter butzleri (strain RM4018) (Arcobacter butzleri).